The primary structure comprises 380 residues: Cytochrome b (380 aa).

4 helical membrane passes run 34-54 (FGSL…LLAT), 78-99 (WLIR…YLHI), 114-134 (WNTG…GYVL), and 179-199 (FFAL…IHLT). Heme b is bound by residues His84 and His98. The heme b site is built by His183 and His197. His202 is an a ubiquinone binding site. The next 4 helical transmembrane spans lie at 227 to 247 (LKDI…ALFS), 289 to 309 (LGGV…PFLH), 321 to 341 (ISQL…WVGS), and 348 to 368 (FIII…ILFP).

Belongs to the cytochrome b family. As to quaternary structure, the cytochrome bc1 complex contains 11 subunits: 3 respiratory subunits (MT-CYB, CYC1 and UQCRFS1), 2 core proteins (UQCRC1 and UQCRC2) and 6 low-molecular weight proteins (UQCRH/QCR6, UQCRB/QCR7, UQCRQ/QCR8, UQCR10/QCR9, UQCR11/QCR10 and a cleavage product of UQCRFS1). This cytochrome bc1 complex then forms a dimer. Heme b serves as cofactor.

It localises to the mitochondrion inner membrane. Component of the ubiquinol-cytochrome c reductase complex (complex III or cytochrome b-c1 complex) that is part of the mitochondrial respiratory chain. The b-c1 complex mediates electron transfer from ubiquinol to cytochrome c. Contributes to the generation of a proton gradient across the mitochondrial membrane that is then used for ATP synthesis. The chain is Cytochrome b (MT-CYB) from Pelecanoides magellani (Magellanic diving petrel).